Consider the following 61-residue polypeptide: Small ribosomal subunit protein uS14 (61 aa).

Zn(2+) contacts are provided by Cys-24, Cys-27, Cys-40, and Cys-43.

The protein belongs to the universal ribosomal protein uS14 family. Zinc-binding uS14 subfamily. As to quaternary structure, part of the 30S ribosomal subunit. Contacts proteins S3 and S10. Zn(2+) serves as cofactor.

Binds 16S rRNA, required for the assembly of 30S particles and may also be responsible for determining the conformation of the 16S rRNA at the A site. This is Small ribosomal subunit protein uS14 from Nitratidesulfovibrio vulgaris (strain DSM 19637 / Miyazaki F) (Desulfovibrio vulgaris).